Consider the following 310-residue polypeptide: Pantothenate kinase (310 aa).

An ATP-binding site is contributed by 95–102 (GSVAVGKS).

This sequence belongs to the prokaryotic pantothenate kinase family.

Its subcellular location is the cytoplasm. It carries out the reaction (R)-pantothenate + ATP = (R)-4'-phosphopantothenate + ADP + H(+). The protein operates within cofactor biosynthesis; coenzyme A biosynthesis; CoA from (R)-pantothenate: step 1/5. The sequence is that of Pantothenate kinase from Rhodococcus opacus (strain B4).